A 2544-amino-acid polypeptide reads, in one-letter code: Highly reducing polyketide synthase pkhB (2544 aa).

One can recognise a Ketosynthase family 3 (KS3) domain in the interval 9–438 (SEPIAIIGMS…GTNAHVILES (430 aa)). Active-site for beta-ketoacyl synthase activity residues include Cys-182, His-317, and His-358. The malonyl-CoA:ACP transacylase (MAT) domain stretch occupies residues 566–876 (VFTGQVFRRS…PYWGCLVRDE (311 aa)). The interval 948 to 1082 (HELLGMPVAG…GMVGIEESAV (135 aa)) is N-terminal hotdog fold. The segment at 948–1252 (HELLGMPVAG…VELAALGRGS (305 aa)) is dehydratase (DH) domain. Positions 948-1254 (HELLGMPVAG…LAALGRGSSA (307 aa)) constitute a PKS/mFAS DH domain. Catalysis depends on His-980, which acts as the Proton acceptor; for dehydratase activity. The interval 1095 to 1254 (YTRQPNPQDL…LAALGRGSSA (160 aa)) is C-terminal hotdog fold. Residue Asp-1165 is the Proton donor; for dehydratase activity of the active site. The tract at residues 1398–1573 (SSLRQLSALL…FSGLDLEIYD (176 aa)) is methyltransferase (CMet) domain. An enoyl reductase (ER) domain region spans residues 1826 to 2142 (GHLGTLAFAE…TGDQMGKVVL (317 aa)). The ketoreductase (KR) domain stretch occupies residues 2169–2356 (ASYLIVGGVG…GVAIDLGPIS (188 aa)). The 78-residue stretch at 2462–2539 (EGARLIGAAI…ALAGLVAEKS (78 aa)) folds into the Carrier domain. Ser-2499 carries the post-translational modification O-(pantetheine 4'-phosphoryl)serine.

It depends on pantetheine 4'-phosphate as a cofactor.

The protein operates within secondary metabolite biosynthesis. In terms of biological role, highly reducing polyketide synthase; part of the pkh gene cluster that mediates the biosynthesis of 2,4-dihydroxy-6-[(3E,5E,7E)-2-oxonona-3,5,7-trienyl]benzaldehyde. The highly reducing polyketide synthase pkhB first produces the (2E,4E,6E)-octa-2,4,6-trienyl strater unit for the non-reducing polyketide synthase pkhA. This octatrienoyl starter is then loaded onto the SAT domain of the NR-PKS pkhA to be condensed with 4 malonyl-CoA units to yield 2,4-dihydroxy-6-[(3E,5E,7E)-2-oxonona-3,5,7-trienyl]benzaldehyde. The polypeptide is Highly reducing polyketide synthase pkhB (Emericella nidulans (strain FGSC A4 / ATCC 38163 / CBS 112.46 / NRRL 194 / M139) (Aspergillus nidulans)).